Reading from the N-terminus, the 254-residue chain is Thiazole synthase (254 aa).

The Schiff-base intermediate with DXP role is filled by lysine 96. Residues glycine 157, 183-184, and 205-206 contribute to the 1-deoxy-D-xylulose 5-phosphate site; these read AG and NT.

The protein belongs to the ThiG family. As to quaternary structure, homotetramer. Forms heterodimers with either ThiH or ThiS.

Its subcellular location is the cytoplasm. It catalyses the reaction [ThiS sulfur-carrier protein]-C-terminal-Gly-aminoethanethioate + 2-iminoacetate + 1-deoxy-D-xylulose 5-phosphate = [ThiS sulfur-carrier protein]-C-terminal Gly-Gly + 2-[(2R,5Z)-2-carboxy-4-methylthiazol-5(2H)-ylidene]ethyl phosphate + 2 H2O + H(+). Its pathway is cofactor biosynthesis; thiamine diphosphate biosynthesis. Functionally, catalyzes the rearrangement of 1-deoxy-D-xylulose 5-phosphate (DXP) to produce the thiazole phosphate moiety of thiamine. Sulfur is provided by the thiocarboxylate moiety of the carrier protein ThiS. In vitro, sulfur can be provided by H(2)S. The chain is Thiazole synthase from Clostridium kluyveri (strain ATCC 8527 / DSM 555 / NBRC 12016 / NCIMB 10680 / K1).